The primary structure comprises 249 residues: Triosephosphate isomerase (249 aa).

Residue 9–11 (NWK) participates in substrate binding. Residue His94 is the Electrophile of the active site. The Proton acceptor role is filled by Glu166. Substrate is bound by residues Gly172 and 232-233 (GG).

This sequence belongs to the triosephosphate isomerase family. In terms of assembly, homodimer.

The protein localises to the cytoplasm. It catalyses the reaction D-glyceraldehyde 3-phosphate = dihydroxyacetone phosphate. Its pathway is carbohydrate biosynthesis; gluconeogenesis. It participates in carbohydrate degradation; glycolysis; D-glyceraldehyde 3-phosphate from glycerone phosphate: step 1/1. Its function is as follows. Involved in the gluconeogenesis. Catalyzes stereospecifically the conversion of dihydroxyacetone phosphate (DHAP) to D-glyceraldehyde-3-phosphate (G3P). This Xylella fastidiosa (strain M23) protein is Triosephosphate isomerase.